The sequence spans 357 residues: 3-isopropylmalate dehydrogenase (357 aa).

76–89 (GPKWDDLPSEKRPE) provides a ligand contact to NAD(+). 4 residues coordinate substrate: Arg96, Arg106, Arg135, and Asp224. Residues Asp224, Asp248, and Asp252 each coordinate Mg(2+). 282–294 (GSAPDIAGQDKAN) provides a ligand contact to NAD(+).

Belongs to the isocitrate and isopropylmalate dehydrogenases family. LeuB type 1 subfamily. As to quaternary structure, homodimer. It depends on Mg(2+) as a cofactor. The cofactor is Mn(2+).

Its subcellular location is the cytoplasm. It catalyses the reaction (2R,3S)-3-isopropylmalate + NAD(+) = 4-methyl-2-oxopentanoate + CO2 + NADH. It functions in the pathway amino-acid biosynthesis; L-leucine biosynthesis; L-leucine from 3-methyl-2-oxobutanoate: step 3/4. In terms of biological role, catalyzes the oxidation of 3-carboxy-2-hydroxy-4-methylpentanoate (3-isopropylmalate) to 3-carboxy-4-methyl-2-oxopentanoate. The product decarboxylates to 4-methyl-2 oxopentanoate. The chain is 3-isopropylmalate dehydrogenase from Nitratidesulfovibrio vulgaris (strain ATCC 29579 / DSM 644 / CCUG 34227 / NCIMB 8303 / VKM B-1760 / Hildenborough) (Desulfovibrio vulgaris).